The sequence spans 341 residues: Heat-inducible transcription repressor HrcA (341 aa).

The protein belongs to the HrcA family.

Functionally, negative regulator of class I heat shock genes (grpE-dnaK-dnaJ and groELS operons). Prevents heat-shock induction of these operons. The sequence is that of Heat-inducible transcription repressor HrcA from Corynebacterium jeikeium (strain K411).